A 426-amino-acid polypeptide reads, in one-letter code: Serine hydroxymethyltransferase 1 (426 aa).

(6S)-5,6,7,8-tetrahydrofolate is bound by residues leucine 121 and 125 to 127 (GHL). Lysine 230 carries the N6-(pyridoxal phosphate)lysine modification. 355–357 (SPF) is a (6S)-5,6,7,8-tetrahydrofolate binding site.

It belongs to the SHMT family. As to quaternary structure, homodimer. It depends on pyridoxal 5'-phosphate as a cofactor.

The protein localises to the cytoplasm. The enzyme catalyses (6R)-5,10-methylene-5,6,7,8-tetrahydrofolate + glycine + H2O = (6S)-5,6,7,8-tetrahydrofolate + L-serine. Its pathway is one-carbon metabolism; tetrahydrofolate interconversion. It participates in amino-acid biosynthesis; glycine biosynthesis; glycine from L-serine: step 1/1. Its function is as follows. Catalyzes the reversible interconversion of serine and glycine with tetrahydrofolate (THF) serving as the one-carbon carrier. This reaction serves as the major source of one-carbon groups required for the biosynthesis of purines, thymidylate, methionine, and other important biomolecules. Also exhibits THF-independent aldolase activity toward beta-hydroxyamino acids, producing glycine and aldehydes, via a retro-aldol mechanism. The protein is Serine hydroxymethyltransferase 1 of Hahella chejuensis (strain KCTC 2396).